Here is a 513-residue protein sequence, read N- to C-terminus: GMP synthase [glutamine-hydrolyzing] (513 aa).

In terms of domain architecture, Glutamine amidotransferase type-1 spans L9 to E198. The Nucleophile role is filled by C86. Active-site residues include H172 and E174. One can recognise a GMPS ATP-PPase domain in the interval W199–R388. Residue S226–S232 participates in ATP binding.

Homodimer.

The enzyme catalyses XMP + L-glutamine + ATP + H2O = GMP + L-glutamate + AMP + diphosphate + 2 H(+). It participates in purine metabolism; GMP biosynthesis; GMP from XMP (L-Gln route): step 1/1. Catalyzes the synthesis of GMP from XMP. The chain is GMP synthase [glutamine-hydrolyzing] from Macrococcus caseolyticus (strain JCSC5402) (Macrococcoides caseolyticum).